The primary structure comprises 274 residues: Shikimate dehydrogenase (NADP(+)) (274 aa).

Shikimate is bound by residues 14 to 16 (SKS) and T60. K64 (proton acceptor) is an active-site residue. An NADP(+)-binding site is contributed by E76. The shikimate site is built by N85 and D101. NADP(+) is bound by residues 126 to 130 (GAGGA), 150 to 155 (NRTARK), and M214. Residue Y216 coordinates shikimate. G238 provides a ligand contact to NADP(+).

Belongs to the shikimate dehydrogenase family. Homodimer.

The enzyme catalyses shikimate + NADP(+) = 3-dehydroshikimate + NADPH + H(+). Its pathway is metabolic intermediate biosynthesis; chorismate biosynthesis; chorismate from D-erythrose 4-phosphate and phosphoenolpyruvate: step 4/7. Functionally, involved in the biosynthesis of the chorismate, which leads to the biosynthesis of aromatic amino acids. Catalyzes the reversible NADPH linked reduction of 3-dehydroshikimate (DHSA) to yield shikimate (SA). The chain is Shikimate dehydrogenase (NADP(+)) from Pseudomonas aeruginosa (strain ATCC 15692 / DSM 22644 / CIP 104116 / JCM 14847 / LMG 12228 / 1C / PRS 101 / PAO1).